The chain runs to 518 residues: ATP synthase subunit beta 2 (518 aa).

An ATP-binding site is contributed by 154–161; the sequence is GGAGVGKT. Residues 455-518 are disordered; that stretch reads IDEAKGKAKP…TDHAADTHES (64 aa). Composition is skewed to basic and acidic residues over residues 473-485 and 507-518; these read PDSK…DPKP and PETDHAADTHES.

Belongs to the ATPase alpha/beta chains family. F-type ATPases have 2 components, CF(1) - the catalytic core - and CF(0) - the membrane proton channel. CF(1) has five subunits: alpha(3), beta(3), gamma(1), delta(1), epsilon(1). CF(0) has three main subunits: a(1), b(2) and c(9-12). The alpha and beta chains form an alternating ring which encloses part of the gamma chain. CF(1) is attached to CF(0) by a central stalk formed by the gamma and epsilon chains, while a peripheral stalk is formed by the delta and b chains.

Its subcellular location is the cell inner membrane. The enzyme catalyses ATP + H2O + 4 H(+)(in) = ADP + phosphate + 5 H(+)(out). Its function is as follows. Produces ATP from ADP in the presence of a proton gradient across the membrane. The catalytic sites are hosted primarily by the beta subunits. The polypeptide is ATP synthase subunit beta 2 (Albidiferax ferrireducens (strain ATCC BAA-621 / DSM 15236 / T118) (Rhodoferax ferrireducens)).